We begin with the raw amino-acid sequence, 248 residues long: Adenosylcobinamide-GDP ribazoletransferase (248 aa).

7 helical membrane passes run 24–44 (EINL…IGAW), 70–90 (IIIT…GLFS), 106–126 (VGAN…ALFL), 134–154 (IGWL…LLFA), 168–188 (IFLG…LVAL), 189–209 (GAFF…FTII), and 228–248 (AGGQ…WGLI).

The protein belongs to the CobS family. The cofactor is Mg(2+).

The protein resides in the cell membrane. The catalysed reaction is alpha-ribazole + adenosylcob(III)inamide-GDP = adenosylcob(III)alamin + GMP + H(+). It carries out the reaction alpha-ribazole 5'-phosphate + adenosylcob(III)inamide-GDP = adenosylcob(III)alamin 5'-phosphate + GMP + H(+). It participates in cofactor biosynthesis; adenosylcobalamin biosynthesis; adenosylcobalamin from cob(II)yrinate a,c-diamide: step 7/7. In terms of biological role, joins adenosylcobinamide-GDP and alpha-ribazole to generate adenosylcobalamin (Ado-cobalamin). Also synthesizes adenosylcobalamin 5'-phosphate from adenosylcobinamide-GDP and alpha-ribazole 5'-phosphate. This Listeria monocytogenes serotype 4a (strain HCC23) protein is Adenosylcobinamide-GDP ribazoletransferase.